Consider the following 290-residue polypeptide: ATP synthase gamma chain (290 aa).

Belongs to the ATPase gamma chain family. As to quaternary structure, F-type ATPases have 2 components, CF(1) - the catalytic core - and CF(0) - the membrane proton channel. CF(1) has five subunits: alpha(3), beta(3), gamma(1), delta(1), epsilon(1). CF(0) has three main subunits: a, b and c.

The protein resides in the cell membrane. Produces ATP from ADP in the presence of a proton gradient across the membrane. The gamma chain is believed to be important in regulating ATPase activity and the flow of protons through the CF(0) complex. This Buchnera aphidicola subsp. Acyrthosiphon pisum (strain 5A) protein is ATP synthase gamma chain.